Here is a 212-residue protein sequence, read N- to C-terminus: Large ribosomal subunit protein uL3 (212 aa).

Positions 135-156 (MTHGNSRSHRVPGSIGQNQSPG) are disordered. At Gln-153 the chain carries N5-methylglutamine.

It belongs to the universal ribosomal protein uL3 family. In terms of assembly, part of the 50S ribosomal subunit. Forms a cluster with proteins L14 and L19. Post-translationally, methylated by PrmB.

Functionally, one of the primary rRNA binding proteins, it binds directly near the 3'-end of the 23S rRNA, where it nucleates assembly of the 50S subunit. The protein is Large ribosomal subunit protein uL3 of Tolumonas auensis (strain DSM 9187 / NBRC 110442 / TA 4).